A 291-amino-acid polypeptide reads, in one-letter code: 3-hydroxy-5-phosphonooxypentane-2,4-dione thiolase (291 aa).

Lys-203 (schiff-base intermediate with substrate) is an active-site residue.

This sequence belongs to the DeoC/FbaB aldolase family. As to quaternary structure, homodecamer.

Its subcellular location is the cytoplasm. The enzyme catalyses dihydroxyacetone phosphate + acetyl-CoA = 3-hydroxy-2,4-dioxopentyl phosphate + CoA. Its function is as follows. Involved in the degradation of phospho-AI-2, thereby terminating induction of the lsr operon and closing the AI-2 signaling cycle. Catalyzes the transfer of an acetyl moiety from 3-hydroxy-5-phosphonooxypentane-2,4-dione to CoA to form glycerone phosphate and acetyl-CoA. This chain is 3-hydroxy-5-phosphonooxypentane-2,4-dione thiolase, found in Salmonella paratyphi A (strain ATCC 9150 / SARB42).